A 380-amino-acid polypeptide reads, in one-letter code: Flap endonuclease 1 (380 aa).

The interval 1-104 (MGIQGLAKLI…GELAKRSERR (104 aa)) is N-domain. Arg19 is modified (symmetric dimethylarginine; by PRMT5). Position 34 (Asp34) interacts with Mg(2+). Arg47 and Arg70 together coordinate DNA. At Lys80 the chain carries N6-acetyllysine. Asp86 lines the Mg(2+) pocket. 2 positions are modified to symmetric dimethylarginine; by PRMT5: Arg100 and Arg104. The interval 122 to 253 (EVEKFTKRLV…KRAVDLIQKH (132 aa)) is I-domain. 4 residues coordinate Mg(2+): Glu158, Glu160, Asp179, and Asp181. DNA is bound at residue Glu158. A Phosphoserine; by CDK2 modification is found at Ser187. Residue Arg192 is modified to Symmetric dimethylarginine; by PRMT5. Ser197 is subject to Phosphoserine. Gly231 and Asp233 together coordinate DNA. Asp233 is a binding site for Mg(2+). 3 positions are modified to phosphoserine: Ser255, Ser293, and Ser335. Residues 327–380 (RLSKSRQGSTQGRLDDFFKVTGSLSSAKRKEPEPKGAAKKKAKTGAAGKFKRGK) are disordered. Thr336 is subject to Phosphothreonine. The interval 336–344 (TQGRLDDFF) is interaction with PCNA. N6-acetyllysine is present on residues Lys354, Lys375, Lys377, and Lys380. The segment covering 363-380 (AAKKKAKTGAAGKFKRGK) has biased composition (basic residues).

Belongs to the XPG/RAD2 endonuclease family. FEN1 subfamily. Interacts with PCNA. Three molecules of FEN1 bind to one PCNA trimer with each molecule binding to one PCNA monomer. PCNA stimulates the nuclease activity without altering cleavage specificity. The C-terminal domain binds EP300; can bind simultaneously to both PCNA and EP300. Interacts with DDX11; this interaction is direct and increases flap endonuclease activity of FEN1. Interacts with WDR4; regulating its endonuclease activity. Interacts with POLB. Mg(2+) serves as cofactor. In terms of processing, acetylated by EP300. Acetylation inhibits both endonuclease and exonuclease activity. Acetylation also reduces DNA-binding activity but does not affect interaction with PCNA or EP300. Post-translationally, phosphorylation upon DNA damage induces relocalization to the nuclear plasma. Phosphorylation at Ser-187 by CDK2 occurs during late S-phase and results in dissociation from PCNA. Methylation at Arg-192 by PRMT5 impedes Ser-187 phosphorylation and increases interaction with PCNA.

The protein resides in the nucleus. Its subcellular location is the nucleolus. It is found in the nucleoplasm. It localises to the mitochondrion. Structure-specific nuclease with 5'-flap endonuclease and 5'-3' exonuclease activities involved in DNA replication and repair. During DNA replication, cleaves the 5'-overhanging flap structure that is generated by displacement synthesis when DNA polymerase encounters the 5'-end of a downstream Okazaki fragment. It enters the flap from the 5'-end and then tracks to cleave the flap base, leaving a nick for ligation. Also involved in the long patch base excision repair (LP-BER) pathway, by cleaving within the apurinic/apyrimidinic (AP) site-terminated flap. Acts as a genome stabilization factor that prevents flaps from equilibrating into structures that lead to duplications and deletions. Also possesses 5'-3' exonuclease activity on nicked or gapped double-stranded DNA, and exhibits RNase H activity. Also involved in replication and repair of rDNA and in repairing mitochondrial DNA. The polypeptide is Flap endonuclease 1 (Bos taurus (Bovine)).